Consider the following 323-residue polypeptide: rRNA 2'-O-methyltransferase fibrillarin (323 aa).

The disordered stretch occupies residues 1 to 80 (MGFERGGRGG…AKGGAAGKKV (80 aa)). Arg5, Arg8, Arg12, Arg16, Arg23, Arg26, Arg30, Arg34, Arg41, Arg47, Arg49, Arg53, Arg57, Arg62, Arg64, and Arg68 each carry asymmetric dimethylarginine. A compositionally biased stretch (gly residues) spans 8 to 76 (RGGARGGGRG…ARGGAKGGAA (69 aa)). Residues 174-175 (TS), 193-194 (EF), 218-219 (DA), and 238-241 (DVAQ) contribute to the S-adenosyl-L-methionine site.

The protein belongs to the methyltransferase superfamily. Fibrillarin family. As to quaternary structure, component of box C/D small nucleolar ribonucleoprotein (snoRNP) particles. Post-translationally, by homology to other fibrillarins, some or all of the N-terminal domain arginines are modified to asymmetric dimethylarginine (DMA).

The protein resides in the nucleus. The protein localises to the nucleolus. The enzyme catalyses L-glutaminyl-[histone H2A] + S-adenosyl-L-methionine = N(5)-methyl-L-glutaminyl-[histone H2A] + S-adenosyl-L-homocysteine + H(+). Its function is as follows. S-adenosyl-L-methionine-dependent methyltransferase that has the ability to methylate both RNAs and proteins. Involved in pre-rRNA processing. Utilizes the methyl donor S-adenosyl-L-methionine to catalyze the site-specific 2'-hydroxyl methylation of ribose moieties in pre-ribosomal RNA. Site specificity is provided by a guide RNA that base pairs with the substrate. Methylation occurs at a characteristic distance from the sequence involved in base pairing with the guide RNA. Also acts as a protein methyltransferase by mediating methylation of 'Gln-105' of histone H2A (H2AQ105me), a modification that impairs binding of the FACT complex and is specifically present at 35S ribosomal DNA locus. This chain is rRNA 2'-O-methyltransferase fibrillarin (nop-1), found in Neurospora crassa (strain ATCC 24698 / 74-OR23-1A / CBS 708.71 / DSM 1257 / FGSC 987).